A 299-amino-acid polypeptide reads, in one-letter code: Probable lipid kinase YegS (299 aa).

The DAGKc domain maps to 2–133; sequence ANFPASLLIL…IDMARVNDKT (132 aa). Residues threonine 40, 66-72, and threonine 95 contribute to the ATP site; that span reads GDGTINE. Leucine 215, aspartate 218, and leucine 220 together coordinate Mg(2+). Catalysis depends on glutamate 271, which acts as the Proton acceptor.

Belongs to the diacylglycerol/lipid kinase family. YegS lipid kinase subfamily. Mg(2+) is required as a cofactor. Requires Ca(2+) as cofactor.

It is found in the cytoplasm. Functionally, probably phosphorylates lipids; the in vivo substrate is unknown. This is Probable lipid kinase YegS from Salmonella agona (strain SL483).